The following is a 395-amino-acid chain: Proteinase-activated receptor 2 (395 aa).

The first 25 residues, 1–25 (MRSPSAAWLLGGVLLLAASGSCNRT), serve as a signal peptide directing secretion. N-linked (GlcNAc...) asparagine glycosylation is found at Asn-23 and Asn-29. A propeptide spans 26 to 34 (VPGNKSKGR) (removed for receptor activation). Topologically, residues 35 to 69 (SLIGNVDNSPVVAGRGVTVKPGFSVDEFSTSVLTG) are extracellular. A helical membrane pass occupies residues 70-99 (KLTTVFLPVVYTIVFVVGLPSNGMALWVFL). Residues 100 to 106 (FRTKKKH) are Cytoplasmic-facing. The helical transmembrane segment at 107–135 (PAVIYMANLALADLLSVTWFPLKIAYHIH) threads the bilayer. The Extracellular portion of the chain corresponds to 136 to 147 (GNNWIYGESLCK). Cys-146 and Cys-224 are oxidised to a cystine. A helical membrane pass occupies residues 148–175 (VLIGFFYGNMYCSILFMTCLSVQRYWVI). The Cytoplasmic portion of the chain corresponds to 176 to 181 (VNPMVH). The helical transmembrane segment at 182–209 (PKKQANIAIGVSLGIWLLILLLTIPLYV) threads the bilayer. Over 210-233 (VKQTSYIRALNITTCHDVLPEEVL) the chain is Extracellular. An N-linked (GlcNAc...) asparagine glycan is attached at Asn-220. The helical transmembrane segment at 234–267 (VGDMFNYFLSLAIGVFLFPAFLTASAYVLMIRTL) threads the bilayer. The Cytoplasmic portion of the chain corresponds to 268 to 275 (QSSAMDES). The helical transmembrane segment at 276–315 (SGKKRRRAIKLIVTVLAMYLICFTPSNLLLVVHYFLIKTR) threads the bilayer. Over 316–321 (GQSHVY) the chain is Extracellular. Residues 322–345 (ALYIVALCLSTLNSCIDPFVYYFI) traverse the membrane as a helical segment. At 346-395 (SQDFRDHAKNALLCRSVRTVKRMQVSLSSKKFSGKSSSYSSSSTSVKGSY) the chain is on the cytoplasmic side. Residue Cys-359 is the site of S-palmitoyl cysteine attachment.

It belongs to the G-protein coupled receptor 1 family. Interacts with TLR4, COPS5 and TMED2. Interacts with GNAQ, GNA11, GNA12, GNA13 and GNA14. In terms of processing, a proteolytic cleavage generates a new N-terminus that functions as a tethered ligand. Activating serine proteases include trypsin, mast cell tryptase, coagulation factors VII and Xa, myeloblastin/PRTN3 and membrane-type serine protease 1/ST14. Proposed subsequent cleavage by serine proteases is leading to receptor deactivation and include neutrophil elastase and cathepsin G. At least in part, implicated proteases are also shown to activate the receptor; the glycosylation status of the receptor is thought to contribute to the difference. N-glycosylated and sialylated. Post-translationally, multiple phosphorylated on serine and threonine residues in the cytoplasmic region upon receptor activation; required for receptor desensitization and recruitment of beta-arrestin. In terms of processing, monoubiquitinated by CBL at the plasma membrane and in early endosomes; not required for receptor endocytosis but for translocation to late endosomes or lysosomes. Deubiquitination involves STAMBP and USP8; required for lysosomal trafficking and receptor degradation.

It localises to the cell membrane. Functionally, receptor for trypsin and trypsin-like enzymes coupled to G proteins. Its function is mediated through the activation of several signaling pathways including phospholipase C (PLC), intracellular calcium, mitogen-activated protein kinase (MAPK), I-kappaB kinase/NF-kappaB and Rho. Can also be transactivated by cleaved F2R/PAR1. Involved in modulation of inflammatory responses and regulation of innate and adaptive immunity, and acts as a sensor for proteolytic enzymes generated during infection. Generally is promoting inflammation. Can signal synergistically with TLR4 and probably TLR2 in inflammatory responses and modulates TLR3 signaling. Has a protective role in establishing the endothelial barrier; the activity involves coagulation factor X. Regulates endothelial cell barrier integrity during neutrophil extravasation, probably following proteolytic cleavage by PRTN3. Proposed to have a bronchoprotective role in airway epithelium, but also shown to compromise the airway epithelial barrier by interrupting E-cadherin adhesion. Involved in the regulation of vascular tone; activation results in hypotension presumably mediated by vasodilation. Associates with a subset of G proteins alpha subunits such as GNAQ, GNA11, GNA14, GNA12 and GNA13, but probably not with G(o) alpha, G(i) subunit alpha-1 and G(i) subunit alpha-2. Believed to be a class B receptor which internalizes as a complex with arrestin and traffic with it to endosomal vesicles, presumably as desensitized receptor, for extended periods of time. Mediates inhibition of TNF-alpha stimulated JNK phosphorylation via coupling to GNAQ and GNA11; the function involves dissociation of RIPK1 and TRADD from TNFR1. Mediates phosphorylation of nuclear factor NF-kappa-B RELA subunit at 'Ser-536'; the function involves IKBKB and is predominantly independent of G proteins. Involved in cellular migration. Involved in cytoskeletal rearrangement and chemotaxis through beta-arrestin-promoted scaffolds; the function is independent of GNAQ and GNA11 and involves promotion of cofilin dephosphorylation and actin filament severing. Induces redistribution of COPS5 from the plasma membrane to the cytosol and activation of the JNK cascade is mediated by COPS5. Involved in the recruitment of leukocytes to the sites of inflammation and is the major PAR receptor capable of modulating eosinophil function such as pro-inflammatory cytokine secretion, superoxide production and degranulation. During inflammation promotes dendritic cell maturation, trafficking to the lymph nodes and subsequent T-cell activation. Involved in antimicrobial response of innate immune cells; activation enhances phagocytosis of Gram-positive and killing of Gram-negative bacteria. Acts synergistically with interferon-gamma in enhancing antiviral responses. Probably mediates activation of pro-inflammatory and pro-fibrotic responses in fibroblasts, triggered by coagulation factor Xa (F10). Probably mediates activation of barrier protective signaling responses in endothelial cells, triggered by coagulation factor Xa (F10). The protein is Proteinase-activated receptor 2 (F2RL1) of Bos taurus (Bovine).